The chain runs to 129 residues: MELLPQGQRNNTQVTFEDQQKINEFSKLIMRKDAIAQELSLQREEKEYLDDVSLEIELIDEDEPVQYKVGDLFIFMKQSKVTAQLEKDAERLDNKIETLEDKQRDIDSRLDALKAILYAKFGDNINLER.

M1 carries the N-acetylmethionine modification.

Belongs to the prefoldin subunit beta family. As to quaternary structure, heterohexamer of two PFD-alpha type and four PFD-beta type subunits.

Functionally, binds specifically to cytosolic chaperonin (c-CPN) and transfers target proteins to it. Binds to nascent polypeptide chain and promotes folding in an environment in which there are many competing pathways for nonnative proteins. The protein is Prefoldin subunit 4 (GIM3) of Saccharomyces cerevisiae (strain ATCC 204508 / S288c) (Baker's yeast).